The following is a 421-amino-acid chain: MFVHPLNVAISDSQNKYQYVVCKHTISVFAGEKLVGYWVDTDQRDSHNSYKKLKSNAGDAKPKGSQGIGAPAVYSYIRNLRLTSDEGKLIACVDSDKSVVIFKIDTSAEDPEKFLQVMKRQQFPKRPNALALADEDTTIIVADKFGDVYKLKIDEEPIRKIDDQSEPILGHVSMLTDVAVAKDANNKSYIITTDRDEHIKISHYPQTFIVDKWLFGHKEFVSSVDLPKWQTKFLFSAGGDKEIFAWNWQSGELLSQYSFEDAVKPFINDQHLAPARFQNEENNVIEYAVASIKSCGQQPYVAFFVEATPVLFILHCNTETGELSLAQQVEFKHNVVSISSNGKSEYLVTFDNRDENAEQLIAFLTYSGDSNKPFSVDENLNKLNSSWISTFKQKDELLADADSVYPLYNIASLKKHGEHFS.

3 WD repeats span residues 72–112 (AVYS…EDPE), 170–212 (GHVS…IVDK), and 216–258 (GHKE…SQYS).

Belongs to the WD repeat TRM82 family. Forms a heterodimer with the catalytic subunit TRM8.

It localises to the nucleus. The protein operates within tRNA modification; N(7)-methylguanine-tRNA biosynthesis. Required for the formation of N(7)-methylguanine at position 46 (m7G46) in tRNA. In the complex, it is required to stabilize and induce conformational changes of the catalytic subunit. This is tRNA (guanine-N(7)-)-methyltransferase non-catalytic subunit TRM82 from Candida glabrata (strain ATCC 2001 / BCRC 20586 / JCM 3761 / NBRC 0622 / NRRL Y-65 / CBS 138) (Yeast).